We begin with the raw amino-acid sequence, 449 residues long: XK-related protein 2 (449 aa).

Transmembrane regions (helical) follow at residues 35 to 55 (FSIL…LYMV), 68 to 88 (TYTF…LIFV), 98 to 118 (LSLF…EAMI), 174 to 194 (IQAF…SLIS), 202 to 222 (VVLM…CNML), 241 to 261 (LCIT…LVLF), 269 to 289 (AVPF…IKFW), 306 to 326 (VGTL…NFSC), 357 to 377 (LVEN…VLLN), and 382 to 402 (LIAL…LLFF).

The protein belongs to the XK family. In terms of tissue distribution, expressed predominantly in the placenta, in syncytiotrophoblasts. Moderate levels in the adrenal gland, low levels in the trachea and very low levels in the bone marrow.

It localises to the cell membrane. The polypeptide is XK-related protein 2 (XKRX) (Homo sapiens (Human)).